A 330-amino-acid chain; its full sequence is 2-oxoisovalerate dehydrogenase subunit alpha (330 aa).

Substrate is bound by residues Phe-44, Tyr-73, 107–110 (MPGH), and Ser-123. 72 to 74 (YYR) contributes to the thiamine diphosphate binding site. Thiamine diphosphate is bound by residues 123-125 (SPV), 153-159 (GEGSSNQ), 183-187 (NKYAI), and His-252. 3 residues coordinate Mg(2+): Glu-154, Asn-183, and Tyr-185. The interval 249-272 (LTPHSSDDDDSSYRGREEVEEAKK) is disordered. A compositionally biased stretch (basic and acidic residues) spans 259-272 (SSYRGREEVEEAKK).

The protein belongs to the BCKDHA family. In terms of assembly, heterotetramer of two alpha and two beta chains. Directly associated with ODBB in the E1 complex. The cofactor is thiamine diphosphate.

The enzyme catalyses N(6)-[(R)-lipoyl]-L-lysyl-[protein] + 3-methyl-2-oxobutanoate + H(+) = N(6)-[(R)-S(8)-2-methylpropanoyldihydrolipoyl]-L-lysyl-[protein] + CO2. Its function is as follows. The branched-chain alpha-keto dehydrogenase complex catalyzes the overall conversion of alpha-keto acids to acyl-CoA and CO(2). It contains multiple copies of three enzymatic components: branched-chain alpha-keto acid decarboxylase (E1), lipoamide acyltransferase (E2) and lipoamide dehydrogenase (E3). The protein is 2-oxoisovalerate dehydrogenase subunit alpha (bfmBAA) of Bacillus subtilis (strain 168).